Here is a 176-residue protein sequence, read N- to C-terminus: Protein SPMIP1 (176 aa).

Positions 55-80 are disordered; it reads TLHPKAPLSPPPAPKSAPSKVPSPVP. Positions 61–80 are enriched in pro residues; that stretch reads PLSPPPAPKSAPSKVPSPVP.

This is Protein SPMIP1 from Homo sapiens (Human).